The chain runs to 96 residues: Putative septation protein SpoVG (96 aa).

It belongs to the SpoVG family.

Functionally, could be involved in septation. This is Putative septation protein SpoVG from Clostridium kluyveri (strain ATCC 8527 / DSM 555 / NBRC 12016 / NCIMB 10680 / K1).